The following is a 232-amino-acid chain: MPLQAPSIGEKFPEIEVMTTHGKIKLPDHFRGKWFVLFSHPADFTPVCTTEFVAFAKRYEDFKKLNTELIGLSVDSTFSHIKWAEWIKEKLGVEIPFPIIADPTGEVAKKLGLLHAQSSTATVRAVFVVDDKGVVRAILYYPQEVGRNIDEILRLIESLQISDKYGRAIPANWPNNELIGDNLIVPPAATVQEAEERLKKFKCFDWWFCYEDKATAEEKELARKFLKRVANC.

Residues 6–161 form the Thioredoxin domain; the sequence is PSIGEKFPEI…ILRLIESLQI (156 aa). Residue C48 is the Cysteine sulfenic acid (-SOH) intermediate of the active site. R124 contributes to the substrate binding site. A disulfide bond links C203 and C209.

Belongs to the peroxiredoxin family. Prx6 subfamily. As to quaternary structure, homodecamer. Pentamer of dimers that assemble into a ring structure.

Its subcellular location is the cytoplasm. The enzyme catalyses a hydroperoxide + [thioredoxin]-dithiol = an alcohol + [thioredoxin]-disulfide + H2O. Functionally, thiol-specific peroxidase that catalyzes the reduction of hydrogen peroxide and organic hydroperoxides to water and alcohols, respectively. Plays a role in cell protection against oxidative stress by detoxifying peroxides. This chain is Peroxiredoxin, found in Hyperthermus butylicus (strain DSM 5456 / JCM 9403 / PLM1-5).